Here is a 556-residue protein sequence, read N- to C-terminus: TNF receptor-associated factor 6-B (556 aa).

An RING-type; degenerate zinc finger spans residues 72-111 (CPICLMALREAVQTPCGHRFCKACIVKSLRDAGHKCPVDN). 2 consecutive TRAF-type zinc fingers follow at residues 152–204 (RHLG…EDMS) and 205–261 (GHEL…NDLA). Residues 318–356 (SHQDCSQETRNLRETIEQLEGRLVRQDHQIRELIAKMET) are a coiled coil. Residues 384 to 533 (NGVFIWKIKG…NDTLFVRCAV (150 aa)) enclose the MATH domain.

It belongs to the TNF receptor-associated factor family. A subfamily. In terms of assembly, homotrimer. Homooligomer.

The protein resides in the cytoplasm. Its subcellular location is the cell cortex. It is found in the nucleus. The protein localises to the lipid droplet. It carries out the reaction S-ubiquitinyl-[E2 ubiquitin-conjugating enzyme]-L-cysteine + [acceptor protein]-L-lysine = [E2 ubiquitin-conjugating enzyme]-L-cysteine + N(6)-ubiquitinyl-[acceptor protein]-L-lysine.. Its pathway is protein modification; protein ubiquitination. Its function is as follows. E3 ubiquitin ligase that, together with UBE2N and UBE2V1, mediates the synthesis of 'Lys-63'-linked-polyubiquitin chains conjugated to proteins, such as IKBKG, IRAK1, AKT1 and AKT2. Also mediates ubiquitination of free/unanchored polyubiquitin chain that leads to MAP3K7 activation. This Xenopus laevis (African clawed frog) protein is TNF receptor-associated factor 6-B (traf6-b).